Here is a 431-residue protein sequence, read N- to C-terminus: Interleukin-11 receptor subunit alpha (431 aa).

The first 23 residues, Met1 to Ser23, serve as a signal peptide directing secretion. Over Thr24–Ala371 the chain is Extracellular. The 84-residue stretch at Pro27–Gly110 folds into the Ig-like C2-type domain. 3 disulfides stabilise this stretch: Cys48/Cys94, Cys120/Cys130, and Cys170/Cys180. Fibronectin type-III domains follow at residues Pro112–Asp219 and Pro220–Thr317. N-linked (GlcNAc...) asparagine glycosylation is present at Asn127. A disordered region spans residues Lys151–Cys170. An N-linked (GlcNAc...) asparagine glycan is attached at Asn194. The WSXWS motif signature appears at Trp304 to Ser308. Positions Glu310–His360 are disordered. Residues Leu320–Leu335 show a composition bias toward basic and acidic residues. The span at Pro344–Pro355 shows a compositional bias: pro residues. The helical transmembrane segment at Ser372 to Leu392 threads the bilayer. The Cytoplasmic portion of the chain corresponds to Arg393–Ser431. Positions Pro402–Ser431 are disordered.

It belongs to the type I cytokine receptor family. Type 3 subfamily. As to quaternary structure, on IL11 binding, forms a multimer complex with IL6ST/gp130. In terms of processing, a short soluble form is also released from the membrane by proteolysis. The sIL11RA is formed either by limited proteolysis of membrane-bound receptors, a process referred to as ectodomain shedding, or directly secreted from the cells after alternative mRNA splicing. mIL11RA is cleaved by the proteases ADAM10, ELANE and PRTN3.

Its subcellular location is the membrane. The protein resides in the secreted. Its function is as follows. Receptor for interleukin-11 (IL11). The receptor systems for IL6, LIF, OSM, CNTF, IL11 and CT1 can utilize IL6ST for initiating signal transmission. The IL11/IL11RA/IL6ST complex may be involved in the control of proliferation and/or differentiation of skeletogenic progenitor or other mesenchymal cells. Essential for the normal development of craniofacial bones and teeth. Restricts suture fusion and tooth number. Functionally, soluble form of IL11 receptor (sIL11RA) that acts as an agonist of IL11 activity. The IL11:sIL11RA complex binds to IL6ST/gp130 on cell surfaces and induces signaling also on cells that do not express membrane-bound IL11RA in a process called IL11 trans-signaling. The polypeptide is Interleukin-11 receptor subunit alpha (Rattus norvegicus (Rat)).